We begin with the raw amino-acid sequence, 240 residues long: Ubiquinone biosynthesis O-methyltransferase (240 aa).

S-adenosyl-L-methionine-binding residues include Arg44, Gly64, Asp85, and Met129.

The protein belongs to the methyltransferase superfamily. UbiG/COQ3 family.

The catalysed reaction is a 3-demethylubiquinol + S-adenosyl-L-methionine = a ubiquinol + S-adenosyl-L-homocysteine + H(+). It carries out the reaction a 3-(all-trans-polyprenyl)benzene-1,2-diol + S-adenosyl-L-methionine = a 2-methoxy-6-(all-trans-polyprenyl)phenol + S-adenosyl-L-homocysteine + H(+). Its pathway is cofactor biosynthesis; ubiquinone biosynthesis. O-methyltransferase that catalyzes the 2 O-methylation steps in the ubiquinone biosynthetic pathway. The polypeptide is Ubiquinone biosynthesis O-methyltransferase (Escherichia coli O6:K15:H31 (strain 536 / UPEC)).